A 511-amino-acid polypeptide reads, in one-letter code: Alpha-amylase 1 (511 aa).

Positions 1–15 (MKFFLLLSLIGFCWA) are cleaved as a signal peptide. Gln16 is modified (pyrrolidone carboxylic acid). Intrachain disulfides connect Cys43-Cys101, Cys85-Cys130, and Cys156-Cys175. Ca(2+)-binding residues include Asn115, Arg173, and Asp182. A chloride-binding site is contributed by Arg210. Catalysis depends on Asp212, which acts as the Nucleophile. A Ca(2+)-binding site is contributed by His216. The active-site Proton donor is Glu248. 2 residues coordinate chloride: Asn313 and Arg352. 2 disulfide bridges follow: Cys393–Cys399 and Cys465–Cys477.

The protein belongs to the glycosyl hydrolase 13 family. As to quaternary structure, monomer. It depends on Ca(2+) as a cofactor. The cofactor is chloride. In terms of tissue distribution, expressed in liver and saliva.

It localises to the secreted. It catalyses the reaction Endohydrolysis of (1-&gt;4)-alpha-D-glucosidic linkages in polysaccharides containing three or more (1-&gt;4)-alpha-linked D-glucose units.. This chain is Alpha-amylase 1 (Amy1), found in Mus musculus (Mouse).